Here is a 156-residue protein sequence, read N- to C-terminus: ATP synthase subunit b (156 aa).

The helical transmembrane segment at 3-23 (ITLTIFAQALAFAGLIWIVAT) threads the bilayer.

Belongs to the ATPase B chain family. In terms of assembly, F-type ATPases have 2 components, F(1) - the catalytic core - and F(0) - the membrane proton channel. F(1) has five subunits: alpha(3), beta(3), gamma(1), delta(1), epsilon(1). F(0) has three main subunits: a(1), b(2) and c(10-14). The alpha and beta chains form an alternating ring which encloses part of the gamma chain. F(1) is attached to F(0) by a central stalk formed by the gamma and epsilon chains, while a peripheral stalk is formed by the delta and b chains.

It localises to the cell inner membrane. In terms of biological role, f(1)F(0) ATP synthase produces ATP from ADP in the presence of a proton or sodium gradient. F-type ATPases consist of two structural domains, F(1) containing the extramembraneous catalytic core and F(0) containing the membrane proton channel, linked together by a central stalk and a peripheral stalk. During catalysis, ATP synthesis in the catalytic domain of F(1) is coupled via a rotary mechanism of the central stalk subunits to proton translocation. Its function is as follows. Component of the F(0) channel, it forms part of the peripheral stalk, linking F(1) to F(0). In Xanthomonas axonopodis pv. citri (strain 306), this protein is ATP synthase subunit b.